Reading from the N-terminus, the 148-residue chain is Large ribosomal subunit protein uL15 (148 aa).

A compositionally biased stretch (basic and acidic residues) spans 1–12; sequence MSDPIKLHDLRP. The tract at residues 1–45 is disordered; it reads MSDPIKLHDLRPAKGANKAKTRVGRGEASKGKTAGRGTKGTKARN.

The protein belongs to the universal ribosomal protein uL15 family. As to quaternary structure, part of the 50S ribosomal subunit.

Its function is as follows. Binds to the 23S rRNA. The protein is Large ribosomal subunit protein uL15 of Corynebacterium urealyticum (strain ATCC 43042 / DSM 7109).